Consider the following 280-residue polypeptide: Manganese transport system membrane protein MntC (280 aa).

9 consecutive transmembrane segments (helical) span residues 16-36 (ALIT…FIIL), 41-61 (LMGD…YMMG), 62-82 (MNFF…IGFV), 92-112 (TAIG…ISFA), 137-157 (TIII…EFLV), 168-188 (YGLN…LVTV), 193-213 (TVGI…AYLL), 221-241 (IMLA…FSYI), and 244-264 (LASG…AFLF).

It belongs to the ABC-3 integral membrane protein family.

It localises to the cell membrane. Its function is as follows. This protein is probably a component of a manganese permease, a binding protein-dependent, ATP-driven transport system. This is Manganese transport system membrane protein MntC (mntC) from Listeria innocua serovar 6a (strain ATCC BAA-680 / CLIP 11262).